Here is a 200-residue protein sequence, read N- to C-terminus: Endoribonuclease YbeY (200 aa).

Positions 120, 124, and 130 each coordinate Zn(2+).

The protein belongs to the endoribonuclease YbeY family. It depends on Zn(2+) as a cofactor.

It is found in the cytoplasm. In terms of biological role, single strand-specific metallo-endoribonuclease involved in late-stage 70S ribosome quality control and in maturation of the 3' terminus of the 16S rRNA. This is Endoribonuclease YbeY from Corynebacterium efficiens (strain DSM 44549 / YS-314 / AJ 12310 / JCM 11189 / NBRC 100395).